We begin with the raw amino-acid sequence, 46 residues long: Cystatin WCPI-3 (46 aa).

The short motif at 35–38 (VVAG) is the Secondary area of contact element.

This sequence belongs to the cystatin family. Phytocystatin subfamily.

Functionally, inhibitor of papain. The protein is Cystatin WCPI-3 of Wisteria floribunda (Japanese wisteria).